The primary structure comprises 174 residues: von Hippel-Lindau tumor suppressor homolog (174 aa).

This sequence belongs to the VHL family. As to quaternary structure, interacts with hif-1 (hydroxylated on 'Pro-621'); the interaction induces hif-1 degradation. May be a component of the cullin E3 ubiquitin ligase complex.

It participates in protein modification; protein ubiquitination. In terms of biological role, involved in the response to variation in environmental oxygen levels by targeting the hypoxia-inducible transcription factor hif-1 for proteasomal degradation when oxygen levels are normal (around 20%). By regulating hif-1 expression, plays a role in iron homeostasis, aging, heat acclimation and progeny size. Mediates resistance to enteropathogenic E.coli. Mediates susceptibility to B.thuringiensis pore-forming toxins. Not involved in P.aeruginosa susceptibility. The polypeptide is von Hippel-Lindau tumor suppressor homolog (Caenorhabditis elegans).